The sequence spans 46 residues: Esculentin-1GRa (46 aa).

As to expression, expressed by the skin glands.

Its subcellular location is the secreted. In terms of biological role, antimicrobial peptide active against the Gram-positive bacterium S.aureus (MIC=12.5 uM) and against the Gram-negative bacterium E.coli (MIC=6 uM). Has no antifungal activity against C.albicans. Shows hemolytic activity against human erythrocytes only at high concentrations (LC(50)=210 uM). The chain is Esculentin-1GRa from Odorrana grahami (Yunnanfu frog).